Reading from the N-terminus, the 350-residue chain is Delta(6)-protoilludene synthase STEHIDRAFT_64702 (350 aa).

Residues Asp-89, Asn-225, Ser-229, and Glu-233 each coordinate Mg(2+). Residues 89 to 93 (DEHSD) carry the D(D/E)XX(D/E) motif motif. An NSE motif motif is present at residues 225-233 (NDIVSYNIE). 2 residues coordinate (2E,6E)-farnesyl diphosphate: Arg-314 and Tyr-315.

It belongs to the terpene synthase family. Mg(2+) is required as a cofactor. It depends on Mn(2+) as a cofactor. Requires Ca(2+) as cofactor. The cofactor is Ni(2+). Co(2+) serves as cofactor.

It carries out the reaction (2E,6E)-farnesyl diphosphate = Delta(6)-protoilludene + diphosphate. It catalyses the reaction (2E,6E)-farnesyl diphosphate = alpha-selinene + diphosphate. Its activity is regulated as follows. Ca(2+) switches the cyclization mechanism of delta(6)-protoilludene synthase from 1,11 to 1,10 cyclization which leads to the production of beta-elemene. Its function is as follows. Terpene cyclase that catalyzes the cyclization of farnesyl diphosphate (FPP) to delta(6)-protoilludene. In presence of Ca(2+), a significant switch from 1,11 to a dual 1,11/1,10 cyclization occurs, producing beta-elemene as the major product, with lower levels of delta(6)-protoilludene and (E)-beta-caryophyllene, and traces of beta-selinene and alpha-selinene. This Stereum hirsutum (strain FP-91666) (White-rot fungus) protein is Delta(6)-protoilludene synthase STEHIDRAFT_64702.